The sequence spans 81 residues: Large ribosomal subunit protein bL27 (81 aa).

A compositionally biased stretch (polar residues) spans 1-11 (MATSKSGGSSK). The interval 1–26 (MATSKSGGSSKNGRDSISKRLGVKRS) is disordered.

It belongs to the bacterial ribosomal protein bL27 family.

The sequence is that of Large ribosomal subunit protein bL27 from Borrelia turicatae (strain 91E135).